The sequence spans 492 residues: Probable cobyric acid synthase (492 aa).

The region spanning 252 to 444 (PIEVNVVKFS…FHGILENFEF (193 aa)) is the GATase cobBQ-type domain. Cys330 serves as the catalytic Nucleophile. His436 is an active-site residue.

This sequence belongs to the CobB/CobQ family. CobQ subfamily.

Its pathway is cofactor biosynthesis; adenosylcobalamin biosynthesis. In terms of biological role, catalyzes amidations at positions B, D, E, and G on adenosylcobyrinic A,C-diamide. NH(2) groups are provided by glutamine, and one molecule of ATP is hydrogenolyzed for each amidation. In Methanococcus maripaludis (strain DSM 14266 / JCM 13030 / NBRC 101832 / S2 / LL), this protein is Probable cobyric acid synthase.